Here is a 344-residue protein sequence, read N- to C-terminus: Protein L-Myc-1-B (344 aa).

Composition is skewed to polar residues over residues 104–113 (GSPRVTNTQK) and 213–223 (NTMSPQHNFHS). 2 disordered regions span residues 104–162 (GSPR…EDEI) and 208–271 (LPPE…YLER). The span at 259 to 270 (DLAKRKNHNYLE) shows a compositional bias: basic and acidic residues. One can recognise a bHLH domain in the interval 261–313 (AKRKNHNYLERKRRNDLRSRFLALREEVPSLSRSTKTPKVVVLSKATEFLKGL). Positions 313–341 (LVIQEQQLTAEKLKLWSRHQQLLRRISQL) are leucine-zipper.

Efficient DNA binding requires dimerization with another bHLH protein. Binds DNA as a heterodimer with MAX. In terms of tissue distribution, high levels in oocytes, modest levels in kidney and low levels in spleen.

It is found in the nucleus. The sequence is that of Protein L-Myc-1-B (mycl1-b) from Xenopus laevis (African clawed frog).